A 336-amino-acid chain; its full sequence is F420-dependent glucose-6-phosphate dehydrogenase (336 aa).

Asp39 lines the coenzyme F420-(gamma-Glu)n pocket. The Proton donor role is filled by His40. Residues Thr76 and 107 to 108 (TG) each bind coenzyme F420-(gamma-Glu)n. Glu109 (proton acceptor) is an active-site residue. Coenzyme F420-(gamma-Glu)n is bound by residues Asn112, 177–178 (GG), and 180–181 (EV). Positions 195, 198, 259, and 283 each coordinate substrate.

It belongs to the F420-dependent glucose-6-phosphate dehydrogenase family. As to quaternary structure, homodimer.

It catalyses the reaction oxidized coenzyme F420-(gamma-L-Glu)(n) + D-glucose 6-phosphate + H(+) = 6-phospho-D-glucono-1,5-lactone + reduced coenzyme F420-(gamma-L-Glu)(n). Its function is as follows. Catalyzes the coenzyme F420-dependent oxidation of glucose 6-phosphate (G6P) to 6-phosphogluconolactone. Appears to have a role in resistance to oxidative stress, via its consumption of G6P that serves as a source of reducing power to combat oxidative stress in mycobacteria. This chain is F420-dependent glucose-6-phosphate dehydrogenase, found in Mycobacterium leprae (strain Br4923).